Consider the following 206-residue polypeptide: Probable thymidylate kinase (206 aa).

Residue 10–17 (GIDGSGKS) participates in ATP binding.

Belongs to the thymidylate kinase family.

The enzyme catalyses dTMP + ATP = dTDP + ADP. This chain is Probable thymidylate kinase, found in Methanosarcina mazei (strain ATCC BAA-159 / DSM 3647 / Goe1 / Go1 / JCM 11833 / OCM 88) (Methanosarcina frisia).